We begin with the raw amino-acid sequence, 256 residues long: Ciliary microtubule associated protein 1A (256 aa).

STPGR repeat units follow at residues 66 to 92 (PGPG…IYGR), 181 to 206 (PGPG…MTAR), and 217 to 242 (PGPG…FGIR). The tract at residues 91–115 (GRPRDISSFRTPGPGSYSPERAGKS) is disordered.

The protein belongs to the CIMAP family.

It localises to the cytoplasm. Its subcellular location is the cytoskeleton. It is found in the flagellum axoneme. In terms of biological role, outer dense fibers are filamentous structures located on the outside of the axoneme in the midpiece and principal piece of the mammalian sperm tail. May help to maintain the passive elastic structures and elastic recoil of the sperm tail. This chain is Ciliary microtubule associated protein 1A (cimap1a), found in Xenopus laevis (African clawed frog).